The primary structure comprises 340 residues: Outer membrane protein B (340 aa).

The first 26 residues, 1–26 (MSSKLVNSLRLTFLSFLGIVSTSLDA), serve as a signal peptide directing secretion.

Belongs to the chlamydial OMP family.

Its subcellular location is the cell outer membrane. The sequence is that of Outer membrane protein B (ompB) from Chlamydia muridarum (strain MoPn / Nigg).